Consider the following 465-residue polypeptide: Uridine kinase-like protein 5 (465 aa).

The uridine kinase stretch occupies residues 26 to 230; it reads LKQPFVIGVA…IVQHIRTKLC (205 aa). The tract at residues 240 to 465 is uracil phosphoribosyltransferase; that stretch reads NIFIISSTFQ…SLSTNLKLRS (226 aa). GTP contacts are provided by residues Lys264, Arg273, and 307–310; that span reads CKRL. Positions 317 and 342 each coordinate 5-phospho-alpha-D-ribose 1-diphosphate. Arg362 contributes to the GTP binding site. Residues Asp368, 373–376, and Glu439 each bind 5-phospho-alpha-D-ribose 1-diphosphate; that span reads SGYS. Residue 438–440 coordinates uracil; sequence GEF.

In the N-terminal section; belongs to the uridine kinase family. The protein in the C-terminal section; belongs to the UPRTase family. Mg(2+) serves as cofactor.

It catalyses the reaction UMP + diphosphate = 5-phospho-alpha-D-ribose 1-diphosphate + uracil. It carries out the reaction cytidine + ATP = CMP + ADP + H(+). The catalysed reaction is uridine + ATP = UMP + ADP + H(+). Its pathway is pyrimidine metabolism; UMP biosynthesis via salvage pathway; UMP from uracil: step 1/1. It functions in the pathway pyrimidine metabolism; CTP biosynthesis via salvage pathway; CTP from cytidine: step 1/3. It participates in pyrimidine metabolism; UMP biosynthesis via salvage pathway; UMP from uridine: step 1/1. Its activity is regulated as follows. Allosterically activated by GTP. Its function is as follows. Involved in the pyrimidine salvage pathway. The sequence is that of Uridine kinase-like protein 5 (UKL5) from Arabidopsis thaliana (Mouse-ear cress).